The primary structure comprises 1202 residues: Caffeine-induced protein 16 (1202 aa).

Positions 1105–1159 constitute a PAP-associated domain; sequence NIALLLRGFFCYYGLTTQYSFDWEAYMIDISSSQLKRKSTEFKDCPFVVLDPFLK.

This is Caffeine-induced protein 16 (cid16) from Schizosaccharomyces pombe (strain 972 / ATCC 24843) (Fission yeast).